We begin with the raw amino-acid sequence, 448 residues long: Probable alpha-galactosidase B (448 aa).

The N-terminal stretch at 1-23 (MSRFHLPLAAAVVLVSCLWSANA) is a signal peptide. Cystine bridges form between Cys46-Cys78 and Cys128-Cys158. Asp156 acts as the Nucleophile in catalysis. Asn163 and Asn181 each carry an N-linked (GlcNAc...) asparagine glycan. 226 to 230 (EWGQA) is a binding site for substrate. N-linked (GlcNAc...) asparagine glycosylation occurs at Asn237. Asp248 serves as the catalytic Proton donor.

It belongs to the glycosyl hydrolase 27 family.

The protein localises to the secreted. It carries out the reaction Hydrolysis of terminal, non-reducing alpha-D-galactose residues in alpha-D-galactosides, including galactose oligosaccharides, galactomannans and galactolipids.. Hydrolyzes a variety of simple alpha-D-galactoside as well as more complex molecules such as oligosaccharides and polysaccharides. The chain is Probable alpha-galactosidase B (aglB) from Aspergillus clavatus (strain ATCC 1007 / CBS 513.65 / DSM 816 / NCTC 3887 / NRRL 1 / QM 1276 / 107).